The sequence spans 158 residues: Transcription elongation factor GreA (158 aa).

Residues 49–69 (SEYESAKDEQAFVEGRISQIE) are a coiled coil. Positions 102 to 125 (EEPESYTIVGESESDPLSGKISNE) are disordered.

The protein belongs to the GreA/GreB family.

Functionally, necessary for efficient RNA polymerase transcription elongation past template-encoded arresting sites. The arresting sites in DNA have the property of trapping a certain fraction of elongating RNA polymerases that pass through, resulting in locked ternary complexes. Cleavage of the nascent transcript by cleavage factors such as GreA or GreB allows the resumption of elongation from the new 3'terminus. GreA releases sequences of 2 to 3 nucleotides. In Limosilactobacillus fermentum (strain NBRC 3956 / LMG 18251) (Lactobacillus fermentum), this protein is Transcription elongation factor GreA.